The primary structure comprises 244 residues: Venom nerve growth factor 2 (244 aa).

The first 18 residues, 1–18, serve as a signal peptide directing secretion; the sequence is MSMLCYTLIIAFLIGIWA. Residues 19–125 constitute a propeptide that is removed on maturation; the sequence is APKSEDNVPL…TLNRNIRAKR (107 aa). A compositionally biased stretch (basic and acidic residues) spans 47-66; the sequence is GLKTSRNTDQRHPAPKKAED. Residues 47–69 form a disordered region; the sequence is GLKTSRNTDQRHPAPKKAEDQEL. 2 disulfides stabilise this stretch: Cys-139/Cys-205 and Cys-181/Cys-233.

This sequence belongs to the NGF-beta family. As to quaternary structure, homodimer; non-covalently linked. Expressed by the venom gland.

The protein resides in the secreted. Nerve growth factor is important for the development and maintenance of the sympathetic and sensory nervous systems. It stimulates division and differentiation of sympathetic and embryonic sensory neurons as well as basal forebrain cholinergic neurons in the brain. Its relevance in the snake venom is not clear. However, it has been shown to inhibit metalloproteinase-dependent proteolysis of platelet glycoprotein Ib alpha, suggesting a metalloproteinase inhibition to prevent metalloprotease autodigestion and/or protection against prey proteases. Binds a lipid between the two protein chains in the homodimer. The lipid-bound form promotes histamine relase from mouse mast cells, contrary to the lipid-free form. The sequence is that of Venom nerve growth factor 2 from Notechis scutatus scutatus (Mainland tiger snake).